The chain runs to 843 residues: Probable disease resistance protein At5g47250 (843 aa).

Residues 28–58 are a coiled coil; that stretch reads MLKENLVLLKSAFDELKAEKEDVVNRVNAGE. The 300-residue stretch at 141-440 folds into the NB-ARC domain; that stretch reads TEQPPPPVVE…GEGFIDEKDG (300 aa). An ATP-binding site is contributed by 183–190; sequence GMGGVGKT. 5 LRR repeats span residues 510 to 531, 535 to 556, 559 to 581, 583 to 604, and 606 to 628; these read TVTKMSLFNNEIKNIPDDPEFP, NLVTLFLQNNRLVDIVGKFFLV, TLVVLDLSWNFQITELPKGISAL, SLRLLNLSGTSIKHLPEGLGVL, and KLIHLNLESTSNLRSVGLISELQ.

This sequence belongs to the disease resistance NB-LRR family.

Its function is as follows. Probable disease resistance protein. The chain is Probable disease resistance protein At5g47250 from Arabidopsis thaliana (Mouse-ear cress).